Consider the following 371-residue polypeptide: tRNA (guanine(26)-N(2))-dimethyltransferase (371 aa).

Residues 4–368 (IEVTEGRTTF…APLDAIAAAL (365 aa)) enclose the Trm1 methyltransferase domain. 5 residues coordinate S-adenosyl-L-methionine: Arg41, Arg66, Asp82, Asp108, and Ala109. The Zn(2+) site is built by Cys237, Cys240, Cys256, and Cys259.

The protein belongs to the class I-like SAM-binding methyltransferase superfamily. Trm1 family.

The catalysed reaction is guanosine(26) in tRNA + 2 S-adenosyl-L-methionine = N(2)-dimethylguanosine(26) in tRNA + 2 S-adenosyl-L-homocysteine + 2 H(+). Functionally, dimethylates a single guanine residue at position 26 of a number of tRNAs using S-adenosyl-L-methionine as donor of the methyl groups. The polypeptide is tRNA (guanine(26)-N(2))-dimethyltransferase (Methanosphaerula palustris (strain ATCC BAA-1556 / DSM 19958 / E1-9c)).